We begin with the raw amino-acid sequence, 341 residues long: Ferredoxin--NADP reductase 2 (341 aa).

FAD-binding residues include Asp-42, Gln-50, Tyr-55, Ile-95, Phe-129, Asp-294, and Ser-335.

Belongs to the ferredoxin--NADP reductase type 2 family. Homodimer. FAD is required as a cofactor.

It carries out the reaction 2 reduced [2Fe-2S]-[ferredoxin] + NADP(+) + H(+) = 2 oxidized [2Fe-2S]-[ferredoxin] + NADPH. In Chloroherpeton thalassium (strain ATCC 35110 / GB-78), this protein is Ferredoxin--NADP reductase 2.